A 377-amino-acid polypeptide reads, in one-letter code: MAATEDERPTGSGEGERLDFLRDRHVRFFQRCLQVLPERYSSLETSRLTIAFFALSGLDMLDSLDVVNKDDIIEWIYSLQVLPTEDRSNLNRCGFRGSSYLGIPFNPSKNPGTAHPYDSGHIAMTYTGLSCLVILGDDLSRVNKEACLAGLRALQLEDGSFCAVPEGSENDMRFVYCASCICYMLNNWSGMDMKKAINYIRRSMSYDNGLAQGAGLESHGGSTFCGIASLCLMGKLEEVFSEKELNRIKRWCIMRQQNGYHGRPNKPVDTCYSFWVGATLKLLKIFQYTNFEKNRNYILSTQDRLVGGFAKWPDSHPDALHAYFGICGLSLMEESGICKVHPALNVSTRTSERLRDLHQSWKTKDSKQCSENVHIST.

PFTB repeat units lie at residues 144-186 (KEAC…YMLN), 193-234 (MKKA…CLMG), 245-284 (LNRI…KLLK), and 291-333 (FEKN…SLME). Geranylgeranyl diphosphate-binding positions include 219-221 (HGG) and 263-266 (RPNK). Zn(2+)-binding residues include D269 and C271. Position 272 to 275 (272 to 275 (YSFW)) interacts with geranylgeranyl diphosphate. H321 is a Zn(2+) binding site.

This sequence belongs to the protein prenyltransferase subunit beta family. In terms of assembly, heterodimer of FNTA and PGGT1B. PGGT1B mediates interaction with substrate peptides. Zn(2+) is required as a cofactor. Mg(2+) serves as cofactor.

The enzyme catalyses geranylgeranyl diphosphate + L-cysteinyl-[protein] = S-geranylgeranyl-L-cysteinyl-[protein] + diphosphate. Its function is as follows. Catalyzes the transfer of a geranyl-geranyl moiety from geranyl-geranyl pyrophosphate to a cysteine at the fourth position from the C-terminus of proteins having the C-terminal sequence Cys-aliphatic-aliphatic-X. Known substrates include RAC1, RAC2, RAP1A and RAP1B. This Bos taurus (Bovine) protein is Geranylgeranyl transferase type-1 subunit beta (PGGT1B).